The following is a 324-amino-acid chain: Nucleotide-binding protein GbCGDNIH1_0395 (324 aa).

Gly-14–Ser-21 is a binding site for ATP. A GTP-binding site is contributed by Asp-59–Ser-62. The disordered stretch occupies residues Ile-286 to Ser-324. The segment covering Ser-299–Gly-311 has biased composition (basic and acidic residues).

The protein belongs to the RapZ-like family.

Functionally, displays ATPase and GTPase activities. The chain is Nucleotide-binding protein GbCGDNIH1_0395 from Granulibacter bethesdensis (strain ATCC BAA-1260 / CGDNIH1).